The following is a 440-amino-acid chain: Serine protease inhibitor A3G (440 aa).

The interval 357-382 is RCL; that stretch reads GTEAAAATGMAGVGCCAVFDFLEIFF.

This sequence belongs to the serpin family. Expressed in bone marrow (particularly hematopoietic stem cells), heart, kidney, liver, lung, skeletal muscle, spleen, testis, thymus and T-cells.

It is found in the cytoplasm. It localises to the nucleus. Its function is as follows. Serine and cysteine protease inhibitor. Can inhibit lysosomal papain-like proteases including the cathepsins B, G, H, K, L and V. Ineffective against elastase, granzyme A, granzyme B, or caspases 3, 8 or 9. Inhibition of cytoplasmic cathepsin B following release from the lysosome may protect cells from apoptosis. This may facilitate the survival of progenitor T-cells and the subsequent development of long term memory CD8 T-cells. This Mus musculus (Mouse) protein is Serine protease inhibitor A3G (Serpina3g).